The primary structure comprises 89 residues: Small ribosomal subunit protein uS17 (89 aa).

It belongs to the universal ribosomal protein uS17 family. As to quaternary structure, part of the 30S ribosomal subunit.

Its function is as follows. One of the primary rRNA binding proteins, it binds specifically to the 5'-end of 16S ribosomal RNA. In Xanthomonas axonopodis pv. citri (strain 306), this protein is Small ribosomal subunit protein uS17.